The primary structure comprises 128 residues: Probable 4-amino-4-deoxy-L-arabinose-phosphoundecaprenol flippase subunit ArnF (128 aa).

Residues 1 to 2 are Cytoplasmic-facing; the sequence is MG. A helical membrane pass occupies residues 3-23; the sequence is LMWGLFSVIIASVAQLSLGFA. The Periplasmic segment spans residues 24-35; it reads ASHLPPMTHLWD. A helical transmembrane segment spans residues 36–56; it reads FIAALLAFGLDARILLLGLLG. Residues 57–76 are Cytoplasmic-facing; the sequence is YLLSVFCWYKTLHKLALSKA. Residues 77–97 traverse the membrane as a helical segment; the sequence is YALLSMSYVLVWIASMVLPGW. Over 98–100 the chain is Periplasmic; the sequence is EGT. The chain crosses the membrane as a helical span at residues 101 to 121; the sequence is FSLKALLGVACIMSGLMLIFL. At 122–128 the chain is on the cytoplasmic side; it reads PTTKQRY.

Belongs to the ArnF family. Heterodimer of ArnE and ArnF.

The protein resides in the cell inner membrane. It functions in the pathway bacterial outer membrane biogenesis; lipopolysaccharide biosynthesis. Translocates 4-amino-4-deoxy-L-arabinose-phosphoundecaprenol (alpha-L-Ara4N-phosphoundecaprenol) from the cytoplasmic to the periplasmic side of the inner membrane. The protein is Probable 4-amino-4-deoxy-L-arabinose-phosphoundecaprenol flippase subunit ArnF of Shigella sonnei (strain Ss046).